The sequence spans 90 residues: DNA-binding protein HU-beta (90 aa).

Belongs to the bacterial histone-like protein family. Heterodimer of an alpha and a beta chain.

Functionally, histone-like DNA-binding protein which is capable of wrapping DNA to stabilize it, and thus to prevent its denaturation under extreme environmental conditions. The protein is DNA-binding protein HU-beta (hupB) of Pseudomonas aeruginosa (strain ATCC 15692 / DSM 22644 / CIP 104116 / JCM 14847 / LMG 12228 / 1C / PRS 101 / PAO1).